Here is a 217-residue protein sequence, read N- to C-terminus: MKKPYRKISDYAIVGGLSALVMVSIVGCKSNADDKQKEQSSLSQSVQKGAFVILEEQKDKSYKVVEEYPSSRTHIIVRDLQGNERVLSNEEIQKLIKEEEAKIDNGTSKLIQPNTNNGGSNEGSGFGLGSAILGSAAGAILGSYIGNKLFNNPNYQQNAQRTYKSPQAYQRSQNSFSKSAPSASSMGTASKGQSGFFGSSRPTSSPAISSGTRGFNS.

Residues 1–27 form the signal peptide; that stretch reads MKKPYRKISDYAIVGGLSALVMVSIVG. Cys28 is lipidated: N-palmitoyl cysteine. Residue Cys28 is the site of S-diacylglycerol cysteine attachment. Residues 160-171 show a composition bias toward polar residues; it reads QRTYKSPQAYQR. The interval 160-217 is disordered; sequence QRTYKSPQAYQRSQNSFSKSAPSASSMGTASKGQSGFFGSSRPTSSPAISSGTRGFNS. Low complexity predominate over residues 172-185; it reads SQNSFSKSAPSASS. The segment covering 186 to 197 has biased composition (polar residues); it reads MGTASKGQSGFF. The span at 199 to 210 shows a compositional bias: low complexity; the sequence is SSRPTSSPAISS.

It belongs to the UPF0323 family.

It is found in the cell membrane. This chain is UPF0323 lipoprotein HPP12_0232, found in Helicobacter pylori (strain P12).